We begin with the raw amino-acid sequence, 113 residues long: Large ribosomal subunit protein bL19 (113 aa).

Belongs to the bacterial ribosomal protein bL19 family.

This protein is located at the 30S-50S ribosomal subunit interface and may play a role in the structure and function of the aminoacyl-tRNA binding site. This Desulfitobacterium hafniense (strain DSM 10664 / DCB-2) protein is Large ribosomal subunit protein bL19.